Reading from the N-terminus, the 126-residue chain is MPEPAKSAPAPKKGSKKAVTKAQKKDGKKRKRSRKESYSIYVYKVLKQVHPDTGISSKAMGIMNSFVNDIFERIAGEASRLAHYNKRSTITSREIQTAVRLLLPGELAKHAVSEGTKAVTKYTSSK.

A compositionally biased stretch (low complexity) spans 1-12; sequence MPEPAKSAPAPK. Residues 1-35 form a disordered region; sequence MPEPAKSAPAPKKGSKKAVTKAQKKDGKKRKRSRK. Proline 2 carries the post-translational modification N-acetylproline. Glutamate 3 is modified (ADP-ribosyl glutamic acid). Position 6 is an N6-(2-hydroxyisobutyryl)lysine; alternate (lysine 6). Position 6 is an N6-(beta-hydroxybutyryl)lysine; alternate (lysine 6). Lysine 6 carries the post-translational modification N6-acetyllysine; alternate. Lysine 6 carries the post-translational modification N6-butyryllysine; alternate. At lysine 6 the chain carries N6-crotonyllysine; alternate. Lysine 6 bears the N6-lactoyllysine; alternate mark. A Glycyl lysine isopeptide (Lys-Gly) (interchain with G-Cter in SUMO2); alternate cross-link involves residue lysine 6. Serine 7 bears the ADP-ribosylserine mark. Lysine 12 carries the N6-(beta-hydroxybutyryl)lysine; alternate modification. Residues lysine 12 and lysine 13 each carry the N6-acetyllysine; alternate modification. Lysine 12 and lysine 13 each carry N6-crotonyllysine; alternate. Lysine 12 carries the N6-lactoyllysine; alternate modification. Lysine 13 bears the N6-(2-hydroxyisobutyryl)lysine; alternate mark. Serine 15 is modified (phosphoserine; by STK4/MST1). N6-acetyllysine; alternate occurs at positions 16, 17, 21, and 24. N6-crotonyllysine; alternate is present on residues lysine 16, lysine 17, lysine 21, and lysine 24. An N6-lactoyllysine; alternate mark is found at lysine 16, lysine 17, lysine 21, and lysine 24. N6-(beta-hydroxybutyryl)lysine; alternate occurs at positions 17 and 21. Lysine 17 is subject to N6-glutaryllysine; alternate. Lysine 21 and lysine 24 each carry N6-(2-hydroxyisobutyryl)lysine; alternate. Lysine 21 bears the N6-butyryllysine; alternate mark. Lysine 21 participates in a covalent cross-link: Glycyl lysine isopeptide (Lys-Gly) (interchain with G-Cter in SUMO2); alternate. Lysine 25 is modified (N6-(2-hydroxyisobutyryl)lysine). N6-(2-hydroxyisobutyryl)lysine; alternate is present on lysine 35. Lysine 35 carries the post-translational modification N6-(beta-hydroxybutyryl)lysine; alternate. At lysine 35 the chain carries N6-crotonyllysine; alternate. Lysine 35 is modified (N6-glutaryllysine; alternate). Lysine 35 bears the N6-succinyllysine; alternate mark. Lysine 35 participates in a covalent cross-link: Glycyl lysine isopeptide (Lys-Gly) (interchain with G-Cter in ubiquitin); alternate. The residue at position 36 (glutamate 36) is a PolyADP-ribosyl glutamic acid. A Phosphoserine; by AMPK modification is found at serine 37. N6-(2-hydroxyisobutyryl)lysine; alternate occurs at positions 44, 47, and 58. At lysine 44 the chain carries N6-lactoyllysine; alternate. 2 positions are modified to N6-glutaryllysine; alternate: lysine 44 and lysine 47. Lysine 47 carries the N6-methyllysine; alternate modification. Residue lysine 58 is modified to N6,N6-dimethyllysine; alternate. Arginine 80 carries the post-translational modification Dimethylated arginine. At lysine 86 the chain carries N6-(2-hydroxyisobutyryl)lysine; alternate. At lysine 86 the chain carries N6-(beta-hydroxybutyryl)lysine; alternate. Lysine 86 is subject to N6-acetyllysine; alternate. Residue lysine 86 is modified to N6-lactoyllysine; alternate. The residue at position 86 (lysine 86) is an N6,N6,N6-trimethyllysine; alternate. Residues arginine 87 and arginine 93 each carry the omega-N-methylarginine modification. Lysine 109 is subject to N6-(2-hydroxyisobutyryl)lysine; alternate. The residue at position 109 (lysine 109) is an N6-lactoyllysine; alternate. Lysine 109 is modified (N6-glutaryllysine; alternate). An N6-methyllysine; alternate modification is found at lysine 109. An O-linked (GlcNAc) serine glycan is attached at serine 113. The residue at position 116 (threonine 116) is a Phosphothreonine. N6-(2-hydroxyisobutyryl)lysine; alternate is present on residues lysine 117 and lysine 121. An N6-(beta-hydroxybutyryl)lysine; alternate mark is found at lysine 117 and lysine 121. 2 positions are modified to N6-lactoyllysine; alternate: lysine 117 and lysine 121. N6-glutaryllysine; alternate occurs at positions 117 and 121. N6-succinyllysine; alternate is present on residues lysine 117 and lysine 121. The residue at position 117 (lysine 117) is an N6-malonyllysine; alternate. The residue at position 117 (lysine 117) is an N6-methylated lysine; alternate. Lysine 121 is covalently cross-linked (Glycyl lysine isopeptide (Lys-Gly) (interchain with G-Cter in ubiquitin); alternate).

The protein belongs to the histone H2B family. As to quaternary structure, the nucleosome is a histone octamer containing two molecules each of H2A, H2B, H3 and H4 assembled in one H3-H4 heterotetramer and two H2A-H2B heterodimers. The octamer wraps approximately 147 bp of DNA. Post-translationally, monoubiquitination at Lys-35 (H2BK34Ub) by the MSL1/MSL2 dimer is required for histone H3 'Lys-4' (H3K4me) and 'Lys-79' (H3K79me) methylation and transcription activation at specific gene loci, such as HOXA9 and MEIS1 loci. Similarly, monoubiquitination at Lys-121 (H2BK120Ub) by the RNF20/40 complex gives a specific tag for epigenetic transcriptional activation and is also prerequisite for histone H3 'Lys-4' and 'Lys-79' methylation. It also functions cooperatively with the FACT dimer to stimulate elongation by RNA polymerase II. H2BK120Ub also acts as a regulator of mRNA splicing: deubiquitination by USP49 is required for efficient cotranscriptional splicing of a large set of exons. In terms of processing, phosphorylation at Ser-37 (H2BS36ph) by AMPK in response to stress promotes transcription. Phosphorylated on Ser-15 (H2BS14ph) by STK4/MST1 during apoptosis; which facilitates apoptotic chromatin condensation. Also phosphorylated on Ser-15 in response to DNA double strand breaks (DSBs), and in correlation with somatic hypermutation and immunoglobulin class-switch recombination. GlcNAcylation at Ser-113 promotes monoubiquitination of Lys-121. It fluctuates in response to extracellular glucose, and associates with transcribed genes. Post-translationally, ADP-ribosylated by PARP1 or PARP2 on Ser-7 (H2BS6ADPr) in response to DNA damage. H2BS6ADPr promotes recruitment of CHD1L. Mono-ADP-ribosylated on Glu-3 (H2BE2ADPr) by PARP3 in response to single-strand breaks. Poly ADP-ribosylation on Glu-36 (H2BE35ADPr) by PARP1 regulates adipogenesis: it inhibits phosphorylation at Ser-37 (H2BS36ph), thereby blocking expression of pro-adipogenetic genes. In terms of processing, crotonylation (Kcr) is specifically present in male germ cells and marks testis-specific genes in post-meiotic cells, including X-linked genes that escape sex chromosome inactivation in haploid cells. Crotonylation marks active promoters and enhancers and confers resistance to transcriptional repressors. It is also associated with post-meiotically activated genes on autosomes. Lactylated in macrophages by EP300/P300 by using lactoyl-CoA directly derived from endogenous or exogenous lactate, leading to stimulates gene transcription.

It is found in the nucleus. Its subcellular location is the chromosome. Its function is as follows. Core component of nucleosome. Nucleosomes wrap and compact DNA into chromatin, limiting DNA accessibility to the cellular machineries which require DNA as a template. Histones thereby play a central role in transcription regulation, DNA repair, DNA replication and chromosomal stability. DNA accessibility is regulated via a complex set of post-translational modifications of histones, also called histone code, and nucleosome remodeling. Has broad antibacterial activity. May contribute to the formation of the functional antimicrobial barrier of the colonic epithelium, and to the bactericidal activity of amniotic fluid. The polypeptide is Histone H2B type 2-E (Homo sapiens (Human)).